The following is a 123-amino-acid chain: UPF0102 protein PSPPH_4120 (123 aa).

This sequence belongs to the UPF0102 family.

The chain is UPF0102 protein PSPPH_4120 from Pseudomonas savastanoi pv. phaseolicola (strain 1448A / Race 6) (Pseudomonas syringae pv. phaseolicola (strain 1448A / Race 6)).